The following is a 298-amino-acid chain: uncharacterized protein (298 aa).

The HTH araC/xylS-type domain occupies 194–295 (KRLNTALIAI…QLSPSQYRKS (102 aa)). 2 consecutive DNA-binding regions (H-T-H motif) follow at residues 214 to 235 (EQLA…QQHI) and 262 to 285 (VLAI…KNYY).

This is an uncharacterized protein from Haemophilus influenzae (strain ATCC 51907 / DSM 11121 / KW20 / Rd).